The primary structure comprises 136 residues: Histone H2A (136 aa).

The segment covering 1-11 (MTGGKSAGGKA) has biased composition (gly residues). The interval 1-23 (MTGGKSAGGKAGTTKNAQSRSSK) is disordered. An N6-acetyllysine mark is found at Lys5 and Lys10. The residue at position 107 (Gln107) is an N5-methylglutamine. Ser133 carries the post-translational modification Phosphoserine. Residues 133–134 (SQ) carry the [ST]-Q motif motif.

This sequence belongs to the histone H2A family. In terms of assembly, the nucleosome is a histone octamer containing two molecules each of H2A, H2B, H3 and H4 assembled in one H3-H4 heterotetramer and two H2A-H2B heterodimers. The octamer wraps approximately 147 bp of DNA. Post-translationally, phosphorylated to form H2AS128ph (gamma-H2A) in response to DNA double-strand breaks (DSBs) generated by exogenous genotoxic agents and by stalled replication forks. Phosphorylation is dependent on the DNA damage checkpoint kinases MEC1/ATR and TEL1/ATM, spreads on either side of a detected DSB site and may mark the surrounding chromatin for recruitment of proteins required for DNA damage signaling and repair. Gamma-H2A is removed from the DNA prior to the strand invasion-primer extension step of the repair process and subsequently dephosphorylated. Dephosphorylation is necessary for efficient recovery from the DNA damage checkpoint. In terms of processing, acetylated by ESA1 to form H2AK4ac and H2AK7ac.

The protein resides in the nucleus. It localises to the chromosome. Core component of nucleosome which plays a central role in DNA double strand break (DSB) repair. Nucleosomes wrap and compact DNA into chromatin, limiting DNA accessibility to the cellular machineries which require DNA as a template. Histones thereby play a central role in transcription regulation, DNA repair, DNA replication and chromosomal stability. DNA accessibility is regulated via a complex set of post-translational modifications of histones, also called histone code, and nucleosome remodeling. This chain is Histone H2A (hta1), found in Botryotinia fuckeliana (strain B05.10) (Noble rot fungus).